The sequence spans 1476 residues: ABC-type transporter FG02316 (1476 aa).

N2 carries an N-linked (GlcNAc...) asparagine glycan. 10 consecutive transmembrane segments (helical) span residues 23 to 43 (FTLL…LLLA), 64 to 84 (WLYC…AFLV), 97 to 117 (SLPA…LSYV), 156 to 176 (AAIT…AETI), 266 to 286 (ILFI…QPFL), 305 to 325 (QGYG…VTTG), 384 to 404 (VWAN…QLGL), 407 to 427 (LIPV…VSFV), 485 to 505 (LLIW…VLSF), and 532 to 552 (LFAL…SFMG). Residues 274–552 (LCFIGFTFCQ…FVTSLSSFMG (279 aa)) enclose the ABC transmembrane type-1 1 domain. A disordered region spans residues 586–615 (ISGVSSSEEKHPVSPIQESMMKTEPSGDSP). Positions 622-847 (IRNASFGYDR…SDNYVSHSDV (226 aa)) constitute an ABC transporter 1 domain. N624 is a glycosylation site (N-linked (GlcNAc...) asparagine). 654 to 661 (GPVGSGKS) is a binding site for ATP. 4 N-linked (GlcNAc...) asparagine glycosylation sites follow: N682, N696, N798, and N836. Positions 842-870 (VSHSDVSSPDGARSKAPSSGPASSSAPVP) are disordered. Low complexity predominate over residues 855-870 (SKAPSSGPASSSAPVP). Transmembrane regions (helical) follow at residues 906–926 (MNAI…AYIF), 950–970 (LGYY…FLVL), 1021–1041 (LIDM…VLCI), 1045–1065 (ILIA…LATL), 1137–1157 (WLTL…VVLV), and 1167–1187 (GLIG…KLLM). The 280-residue stretch at 916–1195 (VFVLAICAYI…LMTFWTTLET (280 aa)) folds into the ABC transmembrane type-1 2 domain. The region spanning 1232–1464 (ILFDQVSAGY…GPDASTFASM (233 aa)) is the ABC transporter 2 domain. Residue N1250 is glycosylated (N-linked (GlcNAc...) asparagine). 1265-1272 (GRTGSGKS) serves as a coordination point for ATP. Residue N1414 is glycosylated (N-linked (GlcNAc...) asparagine).

Belongs to the ABC transporter superfamily. ABCC family. Conjugate transporter (TC 3.A.1.208) subfamily.

The protein resides in the cell membrane. Functionally, ABC-type transporter; part of the gene cluster that mediates the biosynthesis of the fusahexin, a cyclic hydrophobic hexapeptide with the amino acid sequence cyclo-(D-Ala-L-Leu-D-allo-Thr-L-Pro-D-Leu-L-Leu) that plays an important role in cell surface hydrophobicity. This chain is ABC-type transporter FG02316, found in Gibberella zeae (strain ATCC MYA-4620 / CBS 123657 / FGSC 9075 / NRRL 31084 / PH-1) (Wheat head blight fungus).